Consider the following 335-residue polypeptide: Transaldolase (335 aa).

Ser-2 carries the N-acetylserine modification. Catalysis depends on Lys-144, which acts as the Schiff-base intermediate with substrate.

The protein belongs to the transaldolase family. Type 1 subfamily. In terms of assembly, homodimer.

The enzyme catalyses D-sedoheptulose 7-phosphate + D-glyceraldehyde 3-phosphate = D-erythrose 4-phosphate + beta-D-fructose 6-phosphate. It functions in the pathway carbohydrate degradation; pentose phosphate pathway; D-glyceraldehyde 3-phosphate and beta-D-fructose 6-phosphate from D-ribose 5-phosphate and D-xylulose 5-phosphate (non-oxidative stage): step 2/3. In terms of biological role, transaldolase is important for the balance of metabolites in the pentose-phosphate pathway. The protein is Transaldolase (TAL1) of Saccharomyces cerevisiae (strain ATCC 204508 / S288c) (Baker's yeast).